The following is a 382-amino-acid chain: uncharacterized protein (382 aa).

The next 12 membrane-spanning stretches (helical) occupy residues 14–34, 45–65, 79–99, 102–122, 131–151, 157–177, 204–224, 235–255, 270–290, 291–311, 325–345, and 348–368; these read GLLLLTLAIAVLNTLVPLWLA, VVSSSYFTGNLVGTLLTGYVI, FIFAAGCAGLGLMIGFWSWLA, FVAGVGCAMIWVVVESALMCS, LLAAYMMVYYVGTFLGQLLVS, LMSVLPWVTGLTLAGILPLLF, LGVNGCIISGIVLGSLYGLMP, ASIGFWMAVLVSAGILGQWPI, VQVFVVILGSIAMLSQAAMAP, ALFILGAAGFTLYPVAMAWAC, ALLLSYTVGSLLGPSFTAMLM, and FSDNLLFIMIASVSFIYLLML.

It belongs to the major facilitator superfamily. YcaD (TC 2.A.1.26) family.

Its subcellular location is the cell inner membrane. This is an uncharacterized protein from Escherichia coli O7:K1 (strain IAI39 / ExPEC).